The sequence spans 243 residues: Small ribosomal subunit protein uS5 (243 aa).

Composition is skewed to basic and acidic residues over residues 1 to 21 (MPID…EGQK) and 34 to 46 (LEEK…DHKG). The interval 1–85 (MPIDKKQEKN…NFKKNANKKP (85 aa)) is disordered. Residues 89 to 152 (FEEKIVNIAR…KDAQNNLIRV (64 aa)) enclose the S5 DRBM domain.

This sequence belongs to the universal ribosomal protein uS5 family. Part of the 30S ribosomal subunit. Contacts proteins S4 and S8.

Functionally, with S4 and S12 plays an important role in translational accuracy. In terms of biological role, located at the back of the 30S subunit body where it stabilizes the conformation of the head with respect to the body. The protein is Small ribosomal subunit protein uS5 of Mycoplasma mobile (strain ATCC 43663 / 163K / NCTC 11711) (Mesomycoplasma mobile).